The sequence spans 370 residues: Chorismate synthase (370 aa).

2 residues coordinate NADP(+): arginine 48 and arginine 54. Residues 130–132, 242–243, glycine 287, 302–306, and arginine 328 contribute to the FMN site; these read RSS, NA, and KPTSS.

The protein belongs to the chorismate synthase family. As to quaternary structure, homotetramer. FMNH2 serves as cofactor.

The enzyme catalyses 5-O-(1-carboxyvinyl)-3-phosphoshikimate = chorismate + phosphate. Its pathway is metabolic intermediate biosynthesis; chorismate biosynthesis; chorismate from D-erythrose 4-phosphate and phosphoenolpyruvate: step 7/7. Catalyzes the anti-1,4-elimination of the C-3 phosphate and the C-6 proR hydrogen from 5-enolpyruvylshikimate-3-phosphate (EPSP) to yield chorismate, which is the branch point compound that serves as the starting substrate for the three terminal pathways of aromatic amino acid biosynthesis. This reaction introduces a second double bond into the aromatic ring system. This Xanthobacter autotrophicus (strain ATCC BAA-1158 / Py2) protein is Chorismate synthase.